A 167-amino-acid polypeptide reads, in one-letter code: Glutathione peroxidase 1 (167 aa).

Residue Cys41 is part of the active site.

Belongs to the glutathione peroxidase family.

It catalyses the reaction 2 glutathione + H2O2 = glutathione disulfide + 2 H2O. May constitute a glutathione peroxidase-like protective system against oxidative stresses. This is Glutathione peroxidase 1 (GPXHA-1) from Helianthus annuus (Common sunflower).